The chain runs to 325 residues: Interleukin-10 receptor subunit beta (325 aa).

A signal peptide spans 1 to 19 (MAWSLGSWLGGCLLVSALG). The Extracellular segment spans residues 20-220 (MVPPPENVRM…QTTHDETVPS (201 aa)). 2 consecutive Fibronectin type-III domains span residues 23–111 (PPEN…VDDT) and 114–216 (GPPG…THDE). N49, N68, N102, and N161 each carry an N-linked (GlcNAc...) asparagine glycan. A disulfide bridge links C66 with C74. C188 and C209 are disulfide-bonded. Residues 221-242 (WMVAVILMASVFMVCLALLGCF) form a helical membrane-spanning segment. At 243–325 (ALLWCVYKKT…GTPPGQGPQS (83 aa)) the chain is on the cytoplasmic side. Residues 301 to 325 (DSESGKQNPGDSCSLGTPPGQGPQS) are disordered. Over residues 305–315 (GKQNPGDSCSL) the composition is skewed to polar residues.

The protein belongs to the type II cytokine receptor family. Heterodimer with IFNLR1.

It is found in the membrane. Its function is as follows. Shared cell surface receptor required for the activation of five class 2 cytokines: IL10, IL22, IL26, IL28, and IFNL1. The IFNLR1/IL10RB dimer is a receptor for the cytokine ligands IFNL2 and IFNL3 and mediates their antiviral activity. The ligand/receptor complex stimulate the activation of the JAK/STAT signaling pathway leading to the expression of IFN-stimulated genes (ISG), which contribute to the antiviral state. This chain is Interleukin-10 receptor subunit beta (IL10RB), found in Homo sapiens (Human).